The sequence spans 446 residues: F-box/LRR-repeat protein At4g29420 (446 aa).

Residues 1 to 51 (MDELPPELWIKILSRINDSESLARCRVASKTLNSLSREVRAVNLICTWSRY) enclose the F-box domain. 8 LRR repeats span residues 59–84 (VVTP…SVGV), 103–130 (DLYL…SISD), 135–160 (SCWR…EVKN), 181–206 (FIRL…NLIG), 223–248 (CHWT…KLKC), 265–289 (HLSV…ELVS), 318–343 (QSER…SLSP), and 382–407 (NVHQ…RLMI).

This is F-box/LRR-repeat protein At4g29420 from Arabidopsis thaliana (Mouse-ear cress).